Consider the following 371-residue polypeptide: Anhydro-N-acetylmuramic acid kinase (371 aa).

Position 12–20 (12–20) interacts with ATP; it reads GTVLDGNID.

This sequence belongs to the anhydro-N-acetylmuramic acid kinase family.

The catalysed reaction is 1,6-anhydro-N-acetyl-beta-muramate + ATP + H2O = N-acetyl-D-muramate 6-phosphate + ADP + H(+). Its pathway is amino-sugar metabolism; 1,6-anhydro-N-acetylmuramate degradation. It participates in cell wall biogenesis; peptidoglycan recycling. In terms of biological role, catalyzes the specific phosphorylation of 1,6-anhydro-N-acetylmuramic acid (anhMurNAc) with the simultaneous cleavage of the 1,6-anhydro ring, generating MurNAc-6-P. Is required for the utilization of anhMurNAc either imported from the medium or derived from its own cell wall murein, and thus plays a role in cell wall recycling. This is Anhydro-N-acetylmuramic acid kinase from Brucella anthropi (strain ATCC 49188 / DSM 6882 / CCUG 24695 / JCM 21032 / LMG 3331 / NBRC 15819 / NCTC 12168 / Alc 37) (Ochrobactrum anthropi).